The primary structure comprises 331 residues: C-type lectin domain family 4 member K (331 aa).

The Cytoplasmic portion of the chain corresponds to 1–41 (MPEAEMKEEAPEAHFTVDKQNISLWPREPPPKQDLSPVLRK). Residues 42 to 62 (PLCICVAFTCLALVLVTSIVL) traverse the membrane as a helical; Signal-anchor for type II membrane protein segment. Topologically, residues 63 to 331 (QAVFYPRLMG…CKRPYVQTTE (269 aa)) are extracellular. N-linked (GlcNAc...) asparagine glycosylation is found at Asn90 and Asn116. A coiled-coil region spans residues 106–197 (DDAEVQMQIV…LKQQSDILEM (92 aa)). A C-type lectin domain is found at 205–323 (FSGNFYYFSR…CDNTFLFICK (119 aa)). 2 cysteine pairs are disulfide-bonded: Cys226–Cys322 and Cys298–Cys314.

Homotrimer. Expressed by Langerhans cells. Expressed in dendritic cells and by scattered cells in lymph nodes and spleen. Also detected in some non-lymphoid tissues such as lung, liver and heart.

It localises to the membrane. Its function is as follows. Calcium-dependent lectin displaying mannose-binding specificity. Induces the formation of Birbeck granules (BGs); is a potent regulator of membrane superimposition and zippering. Binds to sulfated as well as mannosylated glycans, keratan sulfate (KS) and beta-glucans. Facilitates uptake of antigens and is involved in the routing and/or processing of antigen for presentation to T cells. The protein is C-type lectin domain family 4 member K (Cd207) of Mus musculus (Mouse).